A 312-amino-acid polypeptide reads, in one-letter code: Nicotinamide adenine dinucleotide transporter 1, chloroplastic (312 aa).

Solcar repeat units lie at residues 11–103, 111–199, and 211–299; these read KNVL…LKSF, LSVG…IKVY, and LNAR…VHRF. 6 helical membrane-spanning segments follow: residues 17-37, 78-98, 117-137, 171-191, 216-232, and 271-293; these read AAAG…LDVI, GLSP…TMYD, VLAA…LWVV, GLYS…IQFP, VAVA…TLTY, and FYRG…FTSF.

Belongs to the mitochondrial carrier (TC 2.A.29) family. As to expression, highly expressed in young leaf mesophyll cells, root tips and at the branches of adventitious roots. Low expression in all flower tissues and not detected in siliques and seeds.

The protein localises to the plastid. Its subcellular location is the chloroplast membrane. Inhibited by pyridoxal 5'-phosphate, bathophenanthroline, tannic acid, mersalyl, mercuric chloride, p-hydroxymercuribenzoate, p-hydroxymercuribenzoate sulfonate, bromocresol purple and N-ethylmaleimide. Mediates the NAD(+) import into chloroplast. Favors the NAD(+)(in)/ADP or AMP(out) antiport exchange, but is also able to catalyze a low unidirectional transport (uniport) of NAD(+). Transports NAD(+), nicotinic acid adenine dinucleotide, nicotinamide mononucleotide, nicotinic acid mononucleotide, FAD, FMN, TTP, TDP, TMP, UTP, UDP, UMP, CTP, CDP, CMP, GTP, GDP, GMP, 3'-AMP, ATP, ADP, and AMP, has low transport activity with cAMP, pyrophosphate, NADH and alpha-NAD(+), and has no activity with NADP(+), NADPH, nicotinamide, nicotinic acid, adenosine, thiamine mono- or diphosphate, inorganic phosphate, CoA, folate, NaCl, malate, malonate, citrate, fumarate, aspartate, glutamate, S-adenosylmethionine, lysine, arginine, and ornithine. This is Nicotinamide adenine dinucleotide transporter 1, chloroplastic (NDT1) from Arabidopsis thaliana (Mouse-ear cress).